A 406-amino-acid chain; its full sequence is Tryptophan synthase beta chain (406 aa).

N6-(pyridoxal phosphate)lysine is present on lysine 99.

The protein belongs to the TrpB family. In terms of assembly, tetramer of two alpha and two beta chains. Requires pyridoxal 5'-phosphate as cofactor.

The enzyme catalyses (1S,2R)-1-C-(indol-3-yl)glycerol 3-phosphate + L-serine = D-glyceraldehyde 3-phosphate + L-tryptophan + H2O. The protein operates within amino-acid biosynthesis; L-tryptophan biosynthesis; L-tryptophan from chorismate: step 5/5. Functionally, the beta subunit is responsible for the synthesis of L-tryptophan from indole and L-serine. This chain is Tryptophan synthase beta chain, found in Allorhizobium ampelinum (strain ATCC BAA-846 / DSM 112012 / S4) (Agrobacterium vitis (strain S4)).